A 96-amino-acid chain; its full sequence is Small ribosomal subunit protein bS6 (96 aa).

This sequence belongs to the bacterial ribosomal protein bS6 family.

Its function is as follows. Binds together with bS18 to 16S ribosomal RNA. The chain is Small ribosomal subunit protein bS6 from Bacillus cereus (strain G9842).